Consider the following 470-residue polypeptide: Na(+)/H(+) antiporter NhaA 2 (470 aa).

A run of 11 helical transmembrane segments spans residues 34 to 54 (FLHI…IALL), 85 to 105 (LEWV…GMEI), 121 to 141 (ALPA…YLLL), 150 to 170 (GWGV…TLLG), 179 to 199 (VLLL…IAVF), 202 to 222 (SGVA…VFAM), 241 to 261 (WAGV…IGLI), 317 to 337 (SLIA…FALA), 357 to 377 (LATA…ACWL), 395 to 415 (LLVL…IAQL), and 423 to 443 (LAAG…VALV).

The protein belongs to the NhaA Na(+)/H(+) (TC 2.A.33) antiporter family.

The protein localises to the cell inner membrane. The catalysed reaction is Na(+)(in) + 2 H(+)(out) = Na(+)(out) + 2 H(+)(in). Na(+)/H(+) antiporter that extrudes sodium in exchange for external protons. This chain is Na(+)/H(+) antiporter NhaA 2, found in Myxococcus xanthus (strain DK1622).